The sequence spans 201 residues: Small ribosomal subunit protein uS4 (201 aa).

The S4 RNA-binding domain occupies 91-157 (SRLDNVVYRA…LPFQVARETV (67 aa)).

The protein belongs to the universal ribosomal protein uS4 family. Part of the 30S ribosomal subunit. Contacts protein S5. The interaction surface between S4 and S5 is involved in control of translational fidelity.

One of the primary rRNA binding proteins, it binds directly to 16S rRNA where it nucleates assembly of the body of the 30S subunit. In terms of biological role, with S5 and S12 plays an important role in translational accuracy. The sequence is that of Small ribosomal subunit protein uS4 from Rhodococcus erythropolis (strain PR4 / NBRC 100887).